We begin with the raw amino-acid sequence, 167 residues long: Small ribosomal subunit protein uS5 (167 aa).

One can recognise an S5 DRBM domain in the interval 12–75 (LQEKLVAVNR…EKARRNIVSV (64 aa)).

This sequence belongs to the universal ribosomal protein uS5 family. As to quaternary structure, part of the 30S ribosomal subunit. Contacts proteins S4 and S8.

Functionally, with S4 and S12 plays an important role in translational accuracy. In terms of biological role, located at the back of the 30S subunit body where it stabilizes the conformation of the head with respect to the body. This chain is Small ribosomal subunit protein uS5, found in Shewanella loihica (strain ATCC BAA-1088 / PV-4).